Here is a 173-residue protein sequence, read N- to C-terminus: Nucleoside-triphosphatase THEP1 (173 aa).

Residues 9–16 (GPPGVGKT) and 97–104 (LYVIDEVG) each bind ATP.

The protein belongs to the THEP1 NTPase family.

It catalyses the reaction a ribonucleoside 5'-triphosphate + H2O = a ribonucleoside 5'-diphosphate + phosphate + H(+). Has nucleotide phosphatase activity towards ATP, GTP, CTP, TTP and UTP. May hydrolyze nucleoside diphosphates with lower efficiency. The sequence is that of Nucleoside-triphosphatase THEP1 from Caldivirga maquilingensis (strain ATCC 700844 / DSM 13496 / JCM 10307 / IC-167).